Reading from the N-terminus, the 264-residue chain is Ribosomal RNA small subunit methyltransferase A (264 aa).

S-adenosyl-L-methionine is bound by residues N15, I17, G42, E64, D90, and N109.

This sequence belongs to the class I-like SAM-binding methyltransferase superfamily. rRNA adenine N(6)-methyltransferase family. RsmA subfamily.

The protein localises to the cytoplasm. The catalysed reaction is adenosine(1518)/adenosine(1519) in 16S rRNA + 4 S-adenosyl-L-methionine = N(6)-dimethyladenosine(1518)/N(6)-dimethyladenosine(1519) in 16S rRNA + 4 S-adenosyl-L-homocysteine + 4 H(+). In terms of biological role, specifically dimethylates two adjacent adenosines (A1518 and A1519) in the loop of a conserved hairpin near the 3'-end of 16S rRNA in the 30S particle. May play a critical role in biogenesis of 30S subunits. In Wolbachia pipientis subsp. Culex pipiens (strain wPip), this protein is Ribosomal RNA small subunit methyltransferase A.